Here is a 226-residue protein sequence, read N- to C-terminus: Probable C4-dicarboxylate response regulator DctR (226 aa).

Residues 7–123 (KVLLIEDDPM…RMRQALEKYK (117 aa)) enclose the Response regulatory domain. The residue at position 58 (Asp-58) is a 4-aspartylphosphate. Positions 179–198 (AEEVAKALGIARVTARRYLD) form a DNA-binding region, H-T-H motif.

Post-translationally, phosphorylated by DctS.

It localises to the cytoplasm. Its function is as follows. Member of the two-component regulatory system DctS/DctR. Essential for expression of dctP. The protein is Probable C4-dicarboxylate response regulator DctR (dctR) of Bacillus subtilis (strain 168).